Consider the following 455-residue polypeptide: ATP-dependent protease ATPase subunit HslU (455 aa).

ATP-binding positions include Val-23, 65-70 (GVGKTE), Asp-266, Glu-333, and Arg-405.

The protein belongs to the ClpX chaperone family. HslU subfamily. As to quaternary structure, a double ring-shaped homohexamer of HslV is capped on each side by a ring-shaped HslU homohexamer. The assembly of the HslU/HslV complex is dependent on binding of ATP.

Its subcellular location is the cytoplasm. ATPase subunit of a proteasome-like degradation complex; this subunit has chaperone activity. The binding of ATP and its subsequent hydrolysis by HslU are essential for unfolding of protein substrates subsequently hydrolyzed by HslV. HslU recognizes the N-terminal part of its protein substrates and unfolds these before they are guided to HslV for hydrolysis. This is ATP-dependent protease ATPase subunit HslU from Xanthomonas euvesicatoria pv. vesicatoria (strain 85-10) (Xanthomonas campestris pv. vesicatoria).